We begin with the raw amino-acid sequence, 202 residues long: Orotate phosphoribosyltransferase (202 aa).

5-phospho-alpha-D-ribose 1-diphosphate contacts are provided by residues Lys93 and 113–121 (EDIITTGGS). Orotate-binding residues include Thr117 and Arg145.

Belongs to the purine/pyrimidine phosphoribosyltransferase family. PyrE subfamily. As to quaternary structure, homodimer. Mg(2+) is required as a cofactor.

It catalyses the reaction orotidine 5'-phosphate + diphosphate = orotate + 5-phospho-alpha-D-ribose 1-diphosphate. Its pathway is pyrimidine metabolism; UMP biosynthesis via de novo pathway; UMP from orotate: step 1/2. Catalyzes the transfer of a ribosyl phosphate group from 5-phosphoribose 1-diphosphate to orotate, leading to the formation of orotidine monophosphate (OMP). The sequence is that of Orotate phosphoribosyltransferase from Campylobacter hominis (strain ATCC BAA-381 / DSM 21671 / CCUG 45161 / LMG 19568 / NCTC 13146 / CH001A).